The primary structure comprises 317 residues: Taste receptor type 2 member 14 (317 aa).

Topologically, residues 1–7 (MGGVIKS) are extracellular. The chain crosses the membrane as a helical span at residues 8-28 (IFTFVLIVEFIIGNLGNSFIA). Topologically, residues 29 to 55 (LVNCIDWVKGRKISSVDRILTALAISR) are cytoplasmic. The helical transmembrane segment at 56 to 76 (ISLVWLIFGSWCVSVFFPALF) threads the bilayer. The Extracellular portion of the chain corresponds to 77 to 87 (ATEKMFRMLTN). Cholesterol-binding residues include Thr-86 and Trp-89. Residues 88–108 (IWTVINHFSVWLATGLGTFYF) form a helical membrane-spanning segment. At 109–129 (LKIANFSNSIFLYLKWRVKKV) the chain is on the cytoplasmic side. Residues 130 to 150 (VLVLLLVTSVFLFLNIALINI) traverse the membrane as a helical segment. At 151-184 (HINASINGYRRNKTCSSDSSNFTRFSSLIVLTST) the chain is on the extracellular side. Residues Asn-153, Asn-162, and Asn-171 are each glycosylated (N-linked (GlcNAc...) asparagine). Val-180 provides a ligand contact to cholesterol. Residues 185 to 205 (VFIFIPFTLSLAMFLLLIFSM) traverse the membrane as a helical segment. Residues 206–232 (WKHRKKMQHTVKISGDASTKAHRGVKS) are Cytoplasmic-facing. The helical transmembrane segment at 233 to 253 (VITFFLLYAIFSLSFFISVWT) threads the bilayer. Residues 254–261 (SERLEENL) are Extracellular-facing. Residues 262–282 (IILSQVMGMAYPSCHSCVLIL) traverse the membrane as a helical segment. The cholesterol site is built by Ser-265 and Met-268. The Cytoplasmic portion of the chain corresponds to 283 to 317 (GNKKLRQASLSVLLWLRYMFKDGEPSGHKEFRESS).

It belongs to the G-protein coupled receptor T2R family. Core component of the TAS2R14-GNAI1 complex, consisting of TAS2R14, GNAI1, GNB1 and GNG2; within the complex interacts with GNAI1. Core component of the TAS2R14-GNAT3 complex, consisting of TAS2R14, GNAT3, GNB1 and GNG2; within the complex interacts with GNAT3. Core component of the TAS2R14-GNAS2 complex, consisting of TAS2R14, GNAS2, GNB1 and GNG2; within the complex interacts with GNAS2. In terms of tissue distribution, highly expressed in cerebellum, pancreas, small intestine and thymus; also expressed in adipose, aorta, skin and tongue, but at significantly lower levels. Expressed in subsets of taste receptor cells of the tongue and palate epithelium and exclusively in gustducin-positive cells. Expressed in testis.

It is found in the membrane. It carries out the reaction Ca(2+)(in) = Ca(2+)(out). It catalyses the reaction 3',5'-cyclic AMP(in) = 3',5'-cyclic AMP(out). Its activity is regulated as follows. Basal activity is enhanced by binding to bitter tastants, such as flufenamic acid and aristolochic acid. Regulated by cholesterol in a concentration-dependent manner. Gustducin-linked G-protein coupled receptor that plays a role in the perception of bitterness. The activity of this receptor stimulates GNAT3, activating the gustducin G-protein pathway. Likely plays a role in sensing the chemical composition of the gastrointestinal content and other extra-oral tissues via the inhibitory G-protein pathways. This chain is Taste receptor type 2 member 14 (TAS2R14), found in Homo sapiens (Human).